The chain runs to 182 residues: Isopentenyl-diphosphate Delta-isomerase (182 aa).

Residues His-25 and His-32 each coordinate Mn(2+). The region spanning 30-164 (LLHLAFSSWL…PWAFSPWMVM (135 aa)) is the Nudix hydrolase domain. The active site involves Cys-67. Position 69 (His-69) interacts with Mn(2+). Glu-87 contacts Mg(2+). Positions 114 and 116 each coordinate Mn(2+). Glu-116 is a catalytic residue.

The protein belongs to the IPP isomerase type 1 family. Homodimer. Mg(2+) serves as cofactor. It depends on Mn(2+) as a cofactor.

Its subcellular location is the cytoplasm. It carries out the reaction isopentenyl diphosphate = dimethylallyl diphosphate. It participates in isoprenoid biosynthesis; dimethylallyl diphosphate biosynthesis; dimethylallyl diphosphate from isopentenyl diphosphate: step 1/1. Catalyzes the 1,3-allylic rearrangement of the homoallylic substrate isopentenyl (IPP) to its highly electrophilic allylic isomer, dimethylallyl diphosphate (DMAPP). In Escherichia coli O127:H6 (strain E2348/69 / EPEC), this protein is Isopentenyl-diphosphate Delta-isomerase.